We begin with the raw amino-acid sequence, 419 residues long: uncharacterized protein (419 aa).

12 helical membrane-spanning segments follow: residues 15-35 (RVLM…MPYL), 36-56 (ADYL…VMGV), 77-99 (YKPL…VVAQ), 104-126 (VLIA…RGYL), 140-160 (MFNV…LVLL), 166-186 (ITVL…LVAL), 213-233 (FLTL…IYLA), 246-266 (QYLL…GGQL), 282-302 (LVVG…IPNG), 309-329 (VAVM…AALF), 351-371 (FYST…GSLM), and 377-397 (LNTD…AVAG).

The protein belongs to the major facilitator superfamily.

It is found in the cell membrane. This is an uncharacterized protein from Mycobacterium tuberculosis (strain CDC 1551 / Oshkosh).